Here is a 367-residue protein sequence, read N- to C-terminus: Quinolinate synthase (367 aa).

Residues His-64 and Ser-82 each coordinate iminosuccinate. Position 127 (Cys-127) interacts with [4Fe-4S] cluster. Iminosuccinate contacts are provided by residues 153 to 155 (YVN) and Ser-170. Cys-216 lines the [4Fe-4S] cluster pocket. Residues 242–244 (HPE) and Thr-259 each bind iminosuccinate. Cys-302 contacts [4Fe-4S] cluster.

It belongs to the quinolinate synthase family. Type 2 subfamily. The cofactor is [4Fe-4S] cluster.

Its subcellular location is the cytoplasm. The catalysed reaction is iminosuccinate + dihydroxyacetone phosphate = quinolinate + phosphate + 2 H2O + H(+). It participates in cofactor biosynthesis; NAD(+) biosynthesis; quinolinate from iminoaspartate: step 1/1. Catalyzes the condensation of iminoaspartate with dihydroxyacetone phosphate to form quinolinate. The polypeptide is Quinolinate synthase (Caulobacter vibrioides (strain ATCC 19089 / CIP 103742 / CB 15) (Caulobacter crescentus)).